A 581-amino-acid polypeptide reads, in one-letter code: Meiotic PUF family protein 1 (581 aa).

The PUM-HD domain occupies 225–580 (FPNGTTEPFE…RIAALVEKSK (356 aa)). 8 Pumilio repeats span residues 291–326 (TILP…SFSY), 327–362 (FLKK…NLIE), 363–398 (ELIE…GIFD), 403–438 (KMQG…TCLD), 439–474 (EIIN…RILN), 475–510 (SLLK…RYVK), 518–554 (ELPT…LMAE), and 555–581 (HLKK…KSKS).

In terms of biological role, RNA-binding protein essential for meiotic progression. The sequence is that of Meiotic PUF family protein 1 (mpf1) from Schizosaccharomyces pombe (strain 972 / ATCC 24843) (Fission yeast).